A 775-amino-acid chain; its full sequence is RNA-directed RNA polymerase (775 aa).

A RdRp catalytic domain is found at 473–586; it reads TCAIGFDMKR…FFEADEVDRV (114 aa).

The enzyme catalyses RNA(n) + a ribonucleoside 5'-triphosphate = RNA(n+1) + diphosphate. Its function is as follows. RNA-dependent RNA polymerase that plays an essential role in the virus replication. The chain is RNA-directed RNA polymerase from Brassica napus subsp. rapifera (Purple mistress).